The sequence spans 167 residues: Mediator of RNA polymerase II transcription subunit 10 (167 aa).

The disordered stretch occupies residues 54–92 (STHTKPHPPPPPPPQPTDPTTAAAPALRDNPDPPLSSIQ). Residues 60-70 (HPPPPPPPQPT) are compositionally biased toward pro residues.

It belongs to the Mediator complex subunit 10 family. As to quaternary structure, component of the Mediator complex.

The protein localises to the nucleus. Functionally, component of the Mediator complex, a coactivator involved in the regulated transcription of nearly all RNA polymerase II-dependent genes. Mediator functions as a bridge to convey information from gene-specific regulatory proteins to the basal RNA polymerase II transcription machinery. Mediator is recruited to promoters by direct interactions with regulatory proteins and serves as a scaffold for the assembly of a functional preinitiation complex with RNA polymerase II and the general transcription factors. This chain is Mediator of RNA polymerase II transcription subunit 10 (nut2), found in Aspergillus clavatus (strain ATCC 1007 / CBS 513.65 / DSM 816 / NCTC 3887 / NRRL 1 / QM 1276 / 107).